A 140-amino-acid chain; its full sequence is Profilin-2 (140 aa).

At alanine 2 the chain carries N-acetylalanine.

It belongs to the profilin family. As to quaternary structure, occurs in many kinds of cells as a complex with monomeric actin in a 1:1 ratio. Interacts with PFN2. Interacts with ACTMAP (via N-terminus); the interaction may facilitate efficient cleavage of the acetylated N-terminus of immature actin by ACTMAP.

The protein resides in the cytoplasm. It is found in the cytoskeleton. Functionally, binds to actin and affects the structure of the cytoskeleton. At high concentrations, profilin prevents the polymerization of actin, whereas it enhances it at low concentrations. By binding to PIP2, it inhibits the formation of IP3 and DG. The chain is Profilin-2 (Pfn2) from Rattus norvegicus (Rat).